A 630-amino-acid polypeptide reads, in one-letter code: 1-deoxy-D-xylulose-5-phosphate synthase (630 aa).

Thiamine diphosphate contacts are provided by residues His-75 and 116-118 (GHS). Asp-147 is a Mg(2+) binding site. Residues 148–149 (GA), Asn-176, Tyr-287, and Glu-367 each bind thiamine diphosphate. Asn-176 lines the Mg(2+) pocket.

Belongs to the transketolase family. DXPS subfamily. In terms of assembly, homodimer. The cofactor is Mg(2+). It depends on thiamine diphosphate as a cofactor.

It carries out the reaction D-glyceraldehyde 3-phosphate + pyruvate + H(+) = 1-deoxy-D-xylulose 5-phosphate + CO2. The protein operates within metabolic intermediate biosynthesis; 1-deoxy-D-xylulose 5-phosphate biosynthesis; 1-deoxy-D-xylulose 5-phosphate from D-glyceraldehyde 3-phosphate and pyruvate: step 1/1. In terms of biological role, catalyzes the acyloin condensation reaction between C atoms 2 and 3 of pyruvate and glyceraldehyde 3-phosphate to yield 1-deoxy-D-xylulose-5-phosphate (DXP). This chain is 1-deoxy-D-xylulose-5-phosphate synthase, found in Treponema pallidum (strain Nichols).